Here is a 527-residue protein sequence, read N- to C-terminus: Tyrosine-protein kinase TXK (527 aa).

Residues 35 to 79 (DEELPEKYTQRRRPWLSQLSNKKQSNTGRVQPSKRKPLPPLPPSE) form a disordered region. The span at 51 to 64 (SQLSNKKQSNTGRV) shows a compositional bias: polar residues. Positions 68–73 (KRKPLP) match the Nuclear localization signal motif. In terms of domain architecture, SH3 spans 82 to 142 (EEKIQVKALY…PSNYVTENKI (61 aa)). Position 91 is a phosphotyrosine; by autocatalysis (Tyr-91). The 97-residue stretch at 150 to 246 (WYHRNITRNQ…GLMTRLRYPV (97 aa)) folds into the SH2 domain. In terms of domain architecture, Protein kinase spans 271–527 (LAFIKEIGSG…RAVTEIAETW (257 aa)). Residues 277 to 285 (IGSGQFGVV) and Lys-299 each bind ATP. Asp-390 functions as the Proton acceptor in the catalytic mechanism. Position 420 is a phosphotyrosine; by FYN and autocatalysis (Tyr-420).

This sequence belongs to the protein kinase superfamily. Tyr protein kinase family. TEC subfamily. As to quaternary structure, interacts with PARP1 and EEF1A1. Interacts with SH2D2A. Interacts with FYN. Phosphorylated at Tyr-420 by FYN. Autophosphorylation at Tyr-91 is critical for the activation of TXK, leading to the up-regulation of IFN-gamma gene transcription. Post-translationally, the cysteine string at the N-terminus is palmitoylated and required for the proper subcellular location. As to expression, expressed in T-cells and some myeloid cell lines. Expressed in Th1/Th0 cells with IFN-gamma-producing potential.

It is found in the cytoplasm. The protein resides in the nucleus. The protein localises to the cell membrane. The enzyme catalyses L-tyrosyl-[protein] + ATP = O-phospho-L-tyrosyl-[protein] + ADP + H(+). Its activity is regulated as follows. Activated by phosphorylation by FYN. Functionally, non-receptor tyrosine kinase that plays a redundant role with ITK in regulation of the adaptive immune response. Regulates the development, function and differentiation of conventional T-cells and nonconventional NKT-cells. When antigen presenting cells (APC) activate T-cell receptor (TCR), a series of phosphorylation leads to the recruitment of TXK to the cell membrane, where it is phosphorylated at Tyr-420. Phosphorylation leads to TXK full activation. Also contributes to signaling from many receptors and participates in multiple downstream pathways, including regulation of the actin cytoskeleton. Like ITK, can phosphorylate PLCG1, leading to its localization in lipid rafts and activation, followed by subsequent cleavage of its substrates. In turn, the endoplasmic reticulum releases calcium in the cytoplasm and the nuclear activator of activated T-cells (NFAT) translocates into the nucleus to perform its transcriptional duty. Plays a role in the positive regulation of IFNG transcription in T-helper 1 cells as part of an IFNG promoter-binding complex with PARP1 and EEF1A1. Within the complex, phosphorylates both PARP1 and EEF1A1. Also phosphorylates key sites in LCP2 leading to the up-regulation of Th1 preferred cytokine IL-2. Phosphorylates 'Tyr-201' of CTLA4 which leads to the association of PI-3 kinase with the CTLA4 receptor. The chain is Tyrosine-protein kinase TXK (TXK) from Homo sapiens (Human).